Here is a 673-residue protein sequence, read N- to C-terminus: eEF1A lysine and N-terminal methyltransferase homolog (673 aa).

The protein belongs to the methyltransferase superfamily.

The catalysed reaction is L-lysyl-[protein] + S-adenosyl-L-methionine = N(6)-methyl-L-lysyl-[protein] + S-adenosyl-L-homocysteine + H(+). The enzyme catalyses N(6)-methyl-L-lysyl-[protein] + S-adenosyl-L-methionine = N(6),N(6)-dimethyl-L-lysyl-[protein] + S-adenosyl-L-homocysteine + H(+). It carries out the reaction N-terminal glycyl-L-lysyl-L-glutamyl-[protein] + 3 S-adenosyl-L-methionine = N-terminal N,N,N-trimethyl-glycyl-L-lysyl-L-glutamyl-[protein] + 3 S-adenosyl-L-homocysteine + 3 H(+). Functionally, dual methyltransferase. It catalyzes N-terminal methylation of target proteins via its C-terminus. It catalyzes dimethylation on lysine residues of target proteins via its N-terminus. The polypeptide is eEF1A lysine and N-terminal methyltransferase homolog (Drosophila melanogaster (Fruit fly)).